A 239-amino-acid chain; its full sequence is Leucyl/phenylalanyl-tRNA--protein transferase (239 aa).

This sequence belongs to the L/F-transferase family.

Its subcellular location is the cytoplasm. The catalysed reaction is N-terminal L-lysyl-[protein] + L-leucyl-tRNA(Leu) = N-terminal L-leucyl-L-lysyl-[protein] + tRNA(Leu) + H(+). It catalyses the reaction N-terminal L-arginyl-[protein] + L-leucyl-tRNA(Leu) = N-terminal L-leucyl-L-arginyl-[protein] + tRNA(Leu) + H(+). It carries out the reaction L-phenylalanyl-tRNA(Phe) + an N-terminal L-alpha-aminoacyl-[protein] = an N-terminal L-phenylalanyl-L-alpha-aminoacyl-[protein] + tRNA(Phe). Functions in the N-end rule pathway of protein degradation where it conjugates Leu, Phe and, less efficiently, Met from aminoacyl-tRNAs to the N-termini of proteins containing an N-terminal arginine or lysine. This chain is Leucyl/phenylalanyl-tRNA--protein transferase, found in Syntrophus aciditrophicus (strain SB).